The sequence spans 60 residues: Three-finger toxin Mnn I (60 aa).

4 disulfide bridges follow: cysteine 3–cysteine 22, cysteine 17–cysteine 39, cysteine 41–cysteine 52, and cysteine 53–cysteine 58.

It belongs to the three-finger toxin family. Short-chain subfamily. Type I alpha-neurotoxin sub-subfamily. Expressed by the venom gland.

Its subcellular location is the secreted. Functionally, binds to muscle nicotinic acetylcholine receptor (nAChR) and inhibit acetylcholine from binding to the receptor, thereby impairing neuromuscular transmission. The sequence is that of Three-finger toxin Mnn I from Micrurus nigrocinctus (Central American coral snake).